Here is a 156-residue protein sequence, read N- to C-terminus: Nuclear cap-binding protein subunit 2 (156 aa).

Serine 2 is subject to N-acetylserine. A phosphoserine mark is found at serine 13 and serine 18. Residues tyrosine 20, tyrosine 43, 112 to 116 (RTDWD), 123 to 127 (RQYGR), and 133 to 134 (QV) each bind mRNA. In terms of domain architecture, RRM spans 40–118 (CTLYVGNLSF…RIIRTDWDAG (79 aa)). The tract at residues 124–156 (QYGRGRSGGQVRDEYREDYDAGRGGYGKLAQKQ) is disordered. Over residues 134–144 (VRDEYREDYDA) the composition is skewed to basic and acidic residues. Position 146 is an omega-N-methylarginine (arginine 146).

It belongs to the RRM NCBP2 family. Component of the nuclear cap-binding complex (CBC), a heterodimer composed of NCBP1/CBP80 and NCBP2/CBP20 that interacts with m7GpppG-capped RNA. Found in a U snRNA export complex with PHAX/RNUXA, NCBP1/CBP80, NCBP2/CBP20, RAN, XPO1 and m7G-capped RNA. Interacts with PHAX/RNUXA, EIF4G1, HNRNPF, HNRNPH1 and ALYREF/THOC4/ALY. Interacts with SRRT/ARS2 and KPNA3.

The protein resides in the nucleus. It is found in the cytoplasm. Component of the cap-binding complex (CBC), which binds co-transcriptionally to the 5' cap of pre-mRNAs and is involved in various processes such as pre-mRNA splicing, translation regulation, nonsense-mediated mRNA decay, RNA-mediated gene silencing (RNAi) by microRNAs (miRNAs) and mRNA export. The CBC complex is involved in mRNA export from the nucleus via its interaction with ALYREF/THOC4/ALY, leading to the recruitment of the mRNA export machinery to the 5' end of mRNA and to mRNA export in a 5' to 3' direction through the nuclear pore. The CBC complex is also involved in mediating U snRNA and intronless mRNAs export from the nucleus. The CBC complex is essential for a pioneer round of mRNA translation, before steady state translation when the CBC complex is replaced by cytoplasmic cap-binding protein eIF4E. The pioneer round of mRNA translation mediated by the CBC complex plays a central role in nonsense-mediated mRNA decay (NMD), NMD only taking place in mRNAs bound to the CBC complex, but not on eIF4E-bound mRNAs. The CBC complex enhances NMD in mRNAs containing at least one exon-junction complex (EJC) via its interaction with UPF1, promoting the interaction between UPF1 and UPF2. The CBC complex is also involved in 'failsafe' NMD, which is independent of the EJC complex, while it does not participate in Staufen-mediated mRNA decay (SMD). During cell proliferation, the CBC complex is also involved in microRNAs (miRNAs) biogenesis via its interaction with SRRT/ARS2, thereby being required for miRNA-mediated RNA interference. The CBC complex also acts as a negative regulator of PARN, thereby acting as an inhibitor of mRNA deadenylation. In the CBC complex, NCBP2/CBP20 recognizes and binds capped RNAs (m7GpppG-capped RNA) but requires NCBP1/CBP80 to stabilize the movement of its N-terminal loop and lock the CBC into a high affinity cap-binding state with the cap structure. The conventional cap-binding complex with NCBP2 binds both small nuclear RNA (snRNA) and messenger (mRNA) and is involved in their export from the nucleus. This is Nuclear cap-binding protein subunit 2 (Ncbp2) from Mus musculus (Mouse).